We begin with the raw amino-acid sequence, 302 residues long: Tyrosine--tRNA ligase 2 (302 aa).

An L-tyrosine-binding site is contributed by tyrosine 33. A 'HIGH' region motif is present at residues 38 to 47 (PTADSLHLGH). Residues tyrosine 160 and glutamine 164 each contribute to the L-tyrosine site. The 'KMSKS' region motif lies at 220 to 224 (KFGKS). Lysine 223 contacts ATP.

It belongs to the class-I aminoacyl-tRNA synthetase family. TyrS type 1 subfamily. Homodimer.

The protein localises to the cytoplasm. It carries out the reaction tRNA(Tyr) + L-tyrosine + ATP = L-tyrosyl-tRNA(Tyr) + AMP + diphosphate + H(+). Its function is as follows. Catalyzes the attachment of tyrosine to tRNA(Tyr) in a two-step reaction: tyrosine is first activated by ATP to form Tyr-AMP and then transferred to the acceptor end of tRNA(Tyr). In Streptococcus thermophilus (strain CNRZ 1066), this protein is Tyrosine--tRNA ligase 2 (tyrS2).